Consider the following 39-residue polypeptide: uncharacterized protein (39 aa).

The protein belongs to the orthopoxvirus A30.5 protein family.

This is an uncharacterized protein from Bos taurus (Bovine).